The following is a 399-amino-acid chain: DNA replication and repair protein RecF (399 aa).

30–37 (GSNGIGKT) contributes to the ATP binding site.

It belongs to the RecF family.

Its subcellular location is the cytoplasm. Functionally, the RecF protein is involved in DNA metabolism; it is required for DNA replication and normal SOS inducibility. RecF binds preferentially to single-stranded, linear DNA. It also seems to bind ATP. The chain is DNA replication and repair protein RecF from Paenarthrobacter aurescens (strain TC1).